We begin with the raw amino-acid sequence, 298 residues long: N-acetylmuramic acid 6-phosphate etherase (298 aa).

Residues 55 to 218 (IHAQVSGGGR…STGLMIKSGK (164 aa)) form the SIS domain. E83 serves as the catalytic Proton donor. E114 is a catalytic residue.

It belongs to the GCKR-like family. MurNAc-6-P etherase subfamily. In terms of assembly, homodimer.

The catalysed reaction is N-acetyl-D-muramate 6-phosphate + H2O = N-acetyl-D-glucosamine 6-phosphate + (R)-lactate. It participates in amino-sugar metabolism; 1,6-anhydro-N-acetylmuramate degradation. It functions in the pathway amino-sugar metabolism; N-acetylmuramate degradation. The protein operates within cell wall biogenesis; peptidoglycan recycling. In terms of biological role, specifically catalyzes the cleavage of the D-lactyl ether substituent of MurNAc 6-phosphate, producing GlcNAc 6-phosphate and D-lactate. Together with AnmK, is also required for the utilization of anhydro-N-acetylmuramic acid (anhMurNAc) either imported from the medium or derived from its own cell wall murein, and thus plays a role in cell wall recycling. The protein is N-acetylmuramic acid 6-phosphate etherase of Shigella flexneri.